Reading from the N-terminus, the 401-residue chain is L-rhamnonate dehydratase (401 aa).

Substrate-binding residues include His29 and Arg55. Positions 222, 248, and 276 each coordinate Mg(2+). The active-site Proton acceptor is His325. Glu345 serves as a coordination point for substrate.

Belongs to the mandelate racemase/muconate lactonizing enzyme family. RhamD subfamily. In terms of assembly, homooctamer; tetramer of dimers. Requires Mg(2+) as cofactor.

It carries out the reaction L-rhamnonate = 2-dehydro-3-deoxy-L-rhamnonate + H2O. Functionally, catalyzes the dehydration of L-rhamnonate to 2-keto-3-deoxy-L-rhamnonate (KDR). The protein is L-rhamnonate dehydratase of Klebsiella pneumoniae (strain 342).